Reading from the N-terminus, the 104-residue chain is L-rhamnose mutarotase (104 aa).

Position 18 (tyrosine 18) interacts with substrate. Histidine 22 (proton donor) is an active-site residue. Substrate-binding positions include tyrosine 41 and 76 to 77 (WW).

This sequence belongs to the rhamnose mutarotase family. In terms of assembly, homodimer.

The protein localises to the cytoplasm. It carries out the reaction alpha-L-rhamnose = beta-L-rhamnose. The protein operates within carbohydrate metabolism; L-rhamnose metabolism. Involved in the anomeric conversion of L-rhamnose. This chain is L-rhamnose mutarotase, found in Sinorhizobium fredii (strain NBRC 101917 / NGR234).